Consider the following 246-residue polypeptide: 2-deoxyglucose-6-phosphate phosphatase 1 (246 aa).

Asp-83 acts as the Nucleophile in catalysis. Residue Asp-83 coordinates Mg(2+). Residues Asp-83, Glu-92, and 146–149 (DVKN) contribute to the substrate site. Residue Asp-183 coordinates Mg(2+).

It belongs to the HAD-like hydrolase superfamily. DOG/GPP family. Mg(2+) is required as a cofactor.

The enzyme catalyses 2-deoxy-D-glucose 6-phosphate + H2O = 2-deoxy-D-glucose + phosphate. Functionally, phosphatase that is active on 2-deoxy-D-glucose 6-phosphate (2-DOG-6P), as well as on fructose-1-P. In Saccharomyces cerevisiae (strain ATCC 204508 / S288c) (Baker's yeast), this protein is 2-deoxyglucose-6-phosphate phosphatase 1.